Reading from the N-terminus, the 1589-residue chain is Sterile alpha motif domain-containing protein 9 (1589 aa).

One can recognise an SAM domain in the interval 14–78 (WTKEDVNQWL…ELFKELRKTA (65 aa)). The disordered stretch occupies residues 83 to 135 (IQTSKMGKPSKNAPKDQTVSQKERRETSKQKQKGKENPDMANPSAMSTTAKGS). Positions 103–120 (QKERRETSKQKQKGKENP) are enriched in basic and acidic residues.

Interacts with RGL2. Interacts with EEA1. In terms of assembly, (Microbial infection) Interacts with myxoma virus protein M062. In terms of tissue distribution, widely expressed. Very low levels are detected in skeletal muscle. Not detected in brain. Down-regulated in aggressive fibromatosis, as well as in breast and colon cancers. Up-regulated in fibroblasts from patients with normophosphatemic tumoral calcinosis (NFTC).

It is found in the cytoplasm. Functionally, double-stranded nucleic acid binding that acts as an antiviral factor by playing an essential role in the formation of cytoplasmic antiviral granules. May play a role in the inflammatory response to tissue injury and the control of extra-osseous calcification, acting as a downstream target of TNF-alpha signaling. Involved in the regulation of EGR1, in coordination with RGL2. May be involved in endosome fusion. This is Sterile alpha motif domain-containing protein 9 (SAMD9) from Homo sapiens (Human).